Consider the following 382-residue polypeptide: Beta-lactamase CMY-10 (382 aa).

Residues 1 to 23 form the signal peptide; sequence MQQRQSILWGAVATLMWAGLAHA. Ser-88 functions as the Acyl-ester intermediate in the catalytic mechanism. Ser-88 contributes to the AMP binding site. Ser-88, Gln-144, Tyr-174, Thr-336, Ser-338, and Asn-363 together coordinate GMP. IMP contacts are provided by Ser-88, Gln-144, Tyr-174, Thr-336, Ser-338, and Asn-363. Tyr-174 provides a ligand contact to AMP. An AMP-binding site is contributed by Ser-338.

It belongs to the class-C beta-lactamase family. In terms of assembly, monomer.

The enzyme catalyses a beta-lactam + H2O = a substituted beta-amino acid. Inhibited by various nucleotides in vitro, including adenosine 5'-(P-acetyl)monophosphate (acAMP), inosine-5'-monophosphate (IMP) and guanosine-5'-monophosphate (GMP); IMP and GMP exhibit strongest competitive inhibition. Inhibited by the beta-lactamase-blocking agent, avibactam. Inhibited by clavulanic acid. Weakly inhibited by citric acid. Class C beta-lactamase which confers resistance to penicillins and cephalosporins. Has benzylpenicillin-, ceftazidime-, nitrocefin- and imipenem-hydrolyzing activity. This chain is Beta-lactamase CMY-10, found in Klebsiella aerogenes (Enterobacter aerogenes).